A 128-amino-acid chain; its full sequence is Large ribosomal subunit protein uL18 (128 aa).

It belongs to the universal ribosomal protein uL18 family. As to quaternary structure, part of the 50S ribosomal subunit; part of the 5S rRNA/L5/L18/L25 subcomplex. Contacts the 5S and 23S rRNAs.

This is one of the proteins that bind and probably mediate the attachment of the 5S RNA into the large ribosomal subunit, where it forms part of the central protuberance. This Acidothermus cellulolyticus (strain ATCC 43068 / DSM 8971 / 11B) protein is Large ribosomal subunit protein uL18.